Consider the following 109-residue polypeptide: Defensin-B5 (109 aa).

The N-terminal stretch at 1-20 (MRGLLPFLFLLSFFLSPIQA) is a signal peptide. Positions 21–44 (QPEGREEELEETWSEDRDQAPPRV) are disordered. The propeptide occupies 21-70 (QPEGREEELEETWSEDRDQAPPRVVEESEVVGAENEAGLAAGRSYPWIIL). Residues 34 to 44 (SEDRDQAPPRV) show a composition bias toward basic and acidic residues. 3 cysteine pairs are disulfide-bonded: Cys73-Cys101, Cys80-Cys95, and Cys85-Cys102. The propeptide occupies 107 to 109 (AVP).

Belongs to the beta-defensin family. As to expression, highly expressed in kidney, and expressed at lower levels in testis.

Its subcellular location is the secreted. Has antimicrobial activity. The polypeptide is Defensin-B5 (Ornithorhynchus anatinus (Duckbill platypus)).